Reading from the N-terminus, the 289-residue chain is Bis(5'-nucleosyl)-tetraphosphatase, symmetrical (289 aa).

The protein belongs to the Ap4A hydrolase family.

The catalysed reaction is P(1),P(4)-bis(5'-adenosyl) tetraphosphate + H2O = 2 ADP + 2 H(+). Functionally, hydrolyzes diadenosine 5',5'''-P1,P4-tetraphosphate to yield ADP. This is Bis(5'-nucleosyl)-tetraphosphatase, symmetrical from Yersinia pseudotuberculosis serotype O:3 (strain YPIII).